A 310-amino-acid polypeptide reads, in one-letter code: Ribosomal RNA small subunit methyltransferase H (310 aa).

S-adenosyl-L-methionine is bound by residues 33–35, Asp53, Phe79, Asp100, and Gln107; that span reads AGH.

The protein belongs to the methyltransferase superfamily. RsmH family.

The protein localises to the cytoplasm. The enzyme catalyses cytidine(1402) in 16S rRNA + S-adenosyl-L-methionine = N(4)-methylcytidine(1402) in 16S rRNA + S-adenosyl-L-homocysteine + H(+). Its function is as follows. Specifically methylates the N4 position of cytidine in position 1402 (C1402) of 16S rRNA. In Clostridium beijerinckii (strain ATCC 51743 / NCIMB 8052) (Clostridium acetobutylicum), this protein is Ribosomal RNA small subunit methyltransferase H.